Here is a 435-residue protein sequence, read N- to C-terminus: F-box only protein 9 (435 aa).

The segment at 1–25 (MAEAEEDCHSDAVRVGDEGHESPAE) is disordered. The span at 7–25 (DCHSDAVRVGDEGHESPAE) shows a compositional bias: basic and acidic residues. A TPR repeat occupies 82–115 (ARELFLKAVEEEQNGALYEAIKFYRRAMQLVPDI). Serine 124 is subject to Phosphoserine. An F-box domain is found at 173 to 224 (QTHISVLPMEVLMYIFRWVVSSDLDLRSLEQLSLVCRGFYICARDPEIWRLA).

As to quaternary structure, part of the SCF (SKP1-CUL1-F-box) E3 ubiquitin-protein ligase complex SCF(FBXO9) composed of CUL1, SKP1, RBX1 and FBXO9. Interacts with TTI1 and TELO2; when TTI1 and TELO2 are phosphorylated by CK2.

Its subcellular location is the cytoplasm. Its pathway is protein modification; protein ubiquitination. Its function is as follows. Substrate recognition component of a SCF (SKP1-CUL1-F-box protein) E3 ubiquitin-protein ligase complex which mediates the ubiquitination and subsequent proteasomal degradation of target proteins and plays a role in several biological processes such as cell cycle, cell proliferation, or maintenance of chromosome stability. Ubiquitinates mTORC1-bound TTI1 and TELO2 when they are phosphorylated by CK2 following growth factor deprivation, leading to their degradation. In contrast, does not mediate ubiquitination of TTI1 and TELO2 when they are part of the mTORC2 complex. As a consequence, mTORC1 is inactivated to restrain cell growth and protein translation, while mTORC2 is the activated due to the relief of feedback inhibition by mTORC1. Plays a role in maintaining epithelial cell survival by regulating the turn-over of chromatin modulator PRMT4 through ubiquitination and degradation by the proteasomal pathway. Also regulates PPARgamma stability by facilitating PPARgamma/PPARG ubiquitination and thereby plays a role in adipocyte differentiation. The sequence is that of F-box only protein 9 (Fbxo9) from Rattus norvegicus (Rat).